The sequence spans 378 residues: Sphingosine 1-phosphate receptor 3 (378 aa).

Residues 1–44 (MATTHAQGHQPVLGNDTLREHYDYVGKLAGRLRDPPEGGTLITT) lie on the Extracellular side of the membrane. N-linked (GlcNAc...) asparagine glycosylation is present at N15. Residues 45–65 (ILFLVTCSFIVLENLMVLIAI) form a helical membrane-spanning segment. The Cytoplasmic portion of the chain corresponds to 66-74 (WKNNKFHNR). Residues 75–95 (MYFFIGNLALCDLLAGIAYKV) traverse the membrane as a helical segment. The Extracellular segment spans residues 96–115 (NILMSGRKTFSLSPTVWFLR). The chain crosses the membrane as a helical span at residues 116–136 (EGSMFVALGASTCSLLAIAIE). The Cytoplasmic segment spans residues 137-154 (RHLTMIKMRPYDANKKHR). A helical membrane pass occupies residues 155–175 (VFLLIGMCWLIAFSLGALPIL). At 176 to 196 (GWNCLENFPDCSTILPLYSKK) the chain is on the extracellular side. The chain crosses the membrane as a helical span at residues 197-217 (YIAFLISIFTAILVTIVILYA). The Cytoplasmic portion of the chain corresponds to 218 to 244 (RIYCLVKSSSRRVANHNSERSMALLRT). A helical membrane pass occupies residues 245–265 (VVIVVSVFIACWSPLFILFLI). The Extracellular segment spans residues 266-281 (DVACRAKECSILFKSQ). The chain crosses the membrane as a helical span at residues 282 to 302 (WFIMLAVLNSAMNPVIYTLAS). At 303-378 (KEMRRAFFRL…RSFQNGVLCK (76 aa)) the chain is on the cytoplasmic side. The tract at residues 323-354 (TQASPMQPALDPSRSKSSSSNNSSHSPKVKED) is disordered. Residue S326 is modified to Phosphoserine. The segment covering 337 to 348 (SKSSSSNNSSHS) has biased composition (low complexity).

Belongs to the G-protein coupled receptor 1 family. In terms of tissue distribution, most abundant in heart, lung, kidney and spleen; low but detectable in brain, thymus, muscle and testis; and nearly undetectable in liver, stomach, and intestine. Expressed in embryonic lung from embryonic day 14-18. Also abundantly detected in embryonic nasal cartilage, sphenoid bone, vena cava, Meckel's cartilage/incisor teeth, genital tubercle and bladder.

Its subcellular location is the cell membrane. Receptor for the lysosphingolipid sphingosine 1-phosphate (S1P). S1P is a bioactive lysophospholipid that elicits diverse physiological effect on most types of cells and tissues. This is Sphingosine 1-phosphate receptor 3 (S1pr3) from Mus musculus (Mouse).